We begin with the raw amino-acid sequence, 256 residues long: Enolase-phosphatase E1 (256 aa).

Mg(2+) contacts are provided by Asp-13 and Glu-15. Substrate-binding positions include 127–128 (SS) and Lys-175. Asp-202 contributes to the Mg(2+) binding site.

It belongs to the HAD-like hydrolase superfamily. MasA/MtnC family. In terms of assembly, monomer. The cofactor is Mg(2+).

Its subcellular location is the cytoplasm. The protein localises to the nucleus. The enzyme catalyses 5-methylsulfanyl-2,3-dioxopentyl phosphate + H2O = 1,2-dihydroxy-5-(methylsulfanyl)pent-1-en-3-one + phosphate. It participates in amino-acid biosynthesis; L-methionine biosynthesis via salvage pathway; L-methionine from S-methyl-5-thio-alpha-D-ribose 1-phosphate: step 3/6. The protein operates within amino-acid biosynthesis; L-methionine biosynthesis via salvage pathway; L-methionine from S-methyl-5-thio-alpha-D-ribose 1-phosphate: step 4/6. Its function is as follows. Bifunctional enzyme that catalyzes the enolization of 2,3-diketo-5-methylthiopentyl-1-phosphate (DK-MTP-1-P) into the intermediate 2-hydroxy-3-keto-5-methylthiopentenyl-1-phosphate (HK-MTPenyl-1-P), which is then dephosphorylated to form the acireductone 1,2-dihydroxy-3-keto-5-methylthiopentene (DHK-MTPene). This is Enolase-phosphatase E1 (utr4) from Botryotinia fuckeliana (strain B05.10) (Noble rot fungus).